Here is a 414-residue protein sequence, read N- to C-terminus: Esterase FrsA (414 aa).

The protein belongs to the FrsA family.

The enzyme catalyses a carboxylic ester + H2O = an alcohol + a carboxylate + H(+). Its function is as follows. Catalyzes the hydrolysis of esters. The sequence is that of Esterase FrsA from Salmonella dublin (strain CT_02021853).